A 248-amino-acid polypeptide reads, in one-letter code: 5'-nucleotidase SurE (248 aa).

A divalent metal cation contacts are provided by D8, D9, S39, and N91.

This sequence belongs to the SurE nucleotidase family. The cofactor is a divalent metal cation.

It localises to the cytoplasm. It carries out the reaction a ribonucleoside 5'-phosphate + H2O = a ribonucleoside + phosphate. Its function is as follows. Nucleotidase that shows phosphatase activity on nucleoside 5'-monophosphates. The chain is 5'-nucleotidase SurE from Neisseria meningitidis serogroup C (strain 053442).